We begin with the raw amino-acid sequence, 1863 residues long: Transient receptor potential cation channel subfamily M member 7 (1863 aa).

Residue Met-1 is modified to N-acetylmethionine. Over 1–850 (MSQKSWIEST…ITRKFYAFYH (850 aa)) the chain is Cytoplasmic. Position 101 is a phosphoserine (Ser-101). Low complexity predominate over residues 544-555 (NRRSGRNTSSST). The segment at 544–574 (NRRSGRNTSSSTPQLRKSHETFGNRADKKEK) is disordered. Residues 560-573 (KSHETFGNRADKKE) are compositionally biased toward basic and acidic residues. Residues 851 to 876 (APIVKFWFNTLAYLGFLMLYTFVVLV) form a helical membrane-spanning segment. At 877–882 (KMEQLP) the chain is on the extracellular side. A helical transmembrane segment spans residues 883-904 (SVQEWIVIAYIFTYAIEKVREV). Over 905-923 (FMSEAGKISQKIKVWFSDY) the chain is Cytoplasmic. A helical membrane pass occupies residues 924-943 (FNVSDTIAIISFFVGFGLRF). The Extracellular portion of the chain corresponds to 944–956 (GAKWNYINAYDNH). The chain crosses the membrane as a helical span at residues 957–980 (VFVAGRLIYCLNIIFWYVRLLDFL). Topologically, residues 981–999 (AVNQQAGPYVMMIGKMVAN) are cytoplasmic. A helical membrane pass occupies residues 1000–1023 (MFYIVVIMALVLLSFGVPRKAILY). The Extracellular portion of the chain corresponds to 1024–1025 (PH). The pore-forming intramembrane region spans 1026–1066 (EEPSWSLAKDIVFHPYWMIFGEVYAYEIDVCANDSTLPTIC). The Extracellular segment spans residues 1067–1069 (GPG). The helical transmembrane segment at 1070–1098 (TWLTPFLQAVYLFVQYIIMVNLLIAFFNN) threads the bilayer. The Cytoplasmic portion of the chain corresponds to 1099-1863 (VYLQVKAISN…EATNSVRLML (765 aa)). Residues Cys-1143, Cys-1144, and Cys-1146 are each lipidated (S-palmitoyl cysteine). Thr-1163 carries the post-translational modification Phosphothreonine. Phosphoserine is present on residues Ser-1191, Ser-1193, Ser-1224, Ser-1255, and Ser-1258. Positions 1198-1250 (RVTFERVEQMSIQIKEVGDRVNYIKRSLQSLDSQIGHLQDLSALTVDTLKTLT) form a coiled coil. Thr-1265 bears the Phosphothreonine mark. 9 positions are modified to phosphoserine: Ser-1300, Ser-1357, Ser-1360, Ser-1385, Ser-1386, Ser-1389, Ser-1394, Ser-1395, and Ser-1403. The tract at residues 1380–1418 (NQKLGSSPNSSPHMSSPPTKFSVSTPSQPSCKSHLESTT) is disordered. Residues 1385–1397 (SSPNSSPHMSSPP) are compositionally biased toward low complexity. Polar residues predominate over residues 1398 to 1410 (TKFSVSTPSQPSC). Phosphothreonine is present on Thr-1404. 2 positions are modified to phosphoserine: Ser-1406 and Ser-1445. Thr-1454 bears the Phosphothreonine mark. Ser-1455 bears the Phosphoserine mark. Phosphothreonine occurs at positions 1466 and 1470. Phosphoserine is present on residues Ser-1491, Ser-1498, Ser-1502, Ser-1511, Ser-1525, and Ser-1531. The disordered stretch occupies residues 1498 to 1539 (SRRASTEDSPEVDSKAALLPDWLRDRPSNREMPSEGGTLNGL). Basic and acidic residues predominate over residues 1519–1530 (WLRDRPSNREMP). Position 1535 is a phosphothreonine (Thr-1535). The residue at position 1541 (Ser-1541) is a Phosphoserine. Position 1549 is a phosphothreonine (Thr-1549). Ser-1565 and Ser-1567 each carry phosphoserine. The residue at position 1581 (Thr-1581) is a Phosphothreonine. One can recognise an Alpha-type protein kinase domain in the interval 1592–1822 (ILNNSMSSWS…CCRKLKLPDL (231 aa)). Phosphoserine occurs at positions 1596 and 1613. ADP is bound by residues Gly-1619, Gly-1620, Leu-1621, Arg-1622, and Lys-1646. Residue Ser-1658 is modified to Phosphoserine. Thr-1683 is modified (phosphothreonine). Residues Glu-1718, Glu-1719, and Met-1721 each contribute to the ADP site. His-1751 provides a ligand contact to Zn(2+). The active-site Proton acceptor is the Asp-1765. Residue Asp-1775 coordinates ADP. Residue Ser-1777 is modified to Phosphoserine. Zn(2+) is bound by residues His-1808, Cys-1810, and Cys-1814. Thr-1828 bears the Phosphothreonine mark. The segment at 1838 to 1863 (ESSDLNLQSGNSTKESEATNSVRLML) is disordered. The segment covering 1841-1863 (DLNLQSGNSTKESEATNSVRLML) has biased composition (polar residues). Phosphoserine is present on residues Ser-1846, Ser-1849, and Ser-1858.

This sequence in the C-terminal section; belongs to the protein kinase superfamily. Alpha-type protein kinase family. ALPK subfamily. In the N-terminal section; belongs to the transient receptor (TC 1.A.4) family. LTrpC subfamily. TRPM7 sub-subfamily. Homodimer. Homotetramer. Forms heteromers with TRPM6; heteromeric channels are functionally different from the homomeric channels. Interacts with PLCB1. Zn(2+) is required as a cofactor. In terms of processing, palmitoylated; palmitoylation at Cys-1143, Cys-1144 and Cys-1146 promotes TRPM7 trafficking from the Golgi to the surface membrane. Post-translationally, autophosphorylated; autophosphorylation regulates TRPM7 kinase activity towards its substrates. The C-terminal kinase domain can be cleaved from the channel segment in a cell-type-specific fashion. TRPM7 is cleaved by caspase-8, dissociating the kinase from the ion-conducting pore. The cleaved kinase fragments (M7CKs) can translocate to the cell nucleus and binds chromatin-remodeling complex proteins in a Zn(2+)-dependent manner to ultimately phosphorylate specific Ser/Thr residues of histones. In terms of tissue distribution, found to be expressed in brain and skeletal muscle, with stronger signals in kidney, heart, liver and spleen.

The protein localises to the cell membrane. The protein resides in the cytoplasmic vesicle membrane. Its subcellular location is the nucleus. The enzyme catalyses L-seryl-[protein] + ATP = O-phospho-L-seryl-[protein] + ADP + H(+). The catalysed reaction is L-threonyl-[protein] + ATP = O-phospho-L-threonyl-[protein] + ADP + H(+). It carries out the reaction Mg(2+)(in) = Mg(2+)(out). It catalyses the reaction Ca(2+)(in) = Ca(2+)(out). The enzyme catalyses Zn(2+)(in) = Zn(2+)(out). With respect to regulation, channel displays constitutive activity. Channel activity is negatively regulated by cytosolic Mg(2+), Mg-ATP and low intracellular pH. Resting free cytosolic Mg(2+) and Mg-ATP concentrations seem to be sufficient to block native TRPM7 channel activity. TRPM7 channel activity is highly dependent on membrane levels of phosphatidylinositol 4,5 bisphosphate (PIP2). PIP2 hydrolysis negatively regulates TRPM7 channel activity. TRPM7 kinase activity does not affect channel activity. The kinase activity is controlled through the autophosphorylation of a serine/threonine-rich region located N-terminal to the catalytic domain. Bifunctional protein that combines an ion channel with an intrinsic kinase domain, enabling it to modulate cellular functions either by conducting ions through the pore or by phosphorylating downstream proteins via its kinase domain. The channel is highly permeable to divalent cations, specifically calcium (Ca2+), magnesium (Mg2+) and zinc (Zn2+) and mediates their influx. Controls a wide range of biological processes such as Ca2(+), Mg(2+) and Zn(2+) homeostasis, vesicular Zn(2+) release channel and intracellular Ca(2+) signaling, embryonic development, immune responses, cell motility, proliferation and differentiation. The C-terminal alpha-kinase domain autophosphorylates cytoplasmic residues of TRPM7. TRPM7 phosphorylates SMAD2, suggesting that TRPM7 kinase may play a role in activating SMAD signaling pathways. In vitro, TRPM7 kinase phosphorylates ANXA1 (annexin A1), myosin II isoforms and a variety of proteins with diverse cellular functions. Its function is as follows. The cleaved channel exhibits substantially higher current and potentiates Fas receptor signaling. In terms of biological role, the C-terminal kinase domain can be cleaved from the channel segment in a cell-type-specific fashion. In immune cells, the TRPM7 kinase domain is clipped from the channel domain by caspases in response to Fas-receptor stimulation. The cleaved kinase fragments can translocate to the nucleus, and bind chromatin-remodeling complex proteins in a Zn(2+)-dependent manner to ultimately phosphorylate specific Ser/Thr residues of histones known to be functionally important for cell differentiation and embryonic development. This chain is Transient receptor potential cation channel subfamily M member 7 (Trpm7), found in Mus musculus (Mouse).